A 206-amino-acid polypeptide reads, in one-letter code: Ribosomal RNA large subunit methyltransferase E (206 aa).

Positions 55, 57, 75, 91, and 116 each coordinate S-adenosyl-L-methionine. Residue K156 is the Proton acceptor of the active site.

Belongs to the class I-like SAM-binding methyltransferase superfamily. RNA methyltransferase RlmE family.

The protein resides in the cytoplasm. It catalyses the reaction uridine(2552) in 23S rRNA + S-adenosyl-L-methionine = 2'-O-methyluridine(2552) in 23S rRNA + S-adenosyl-L-homocysteine + H(+). In terms of biological role, specifically methylates the uridine in position 2552 of 23S rRNA at the 2'-O position of the ribose in the fully assembled 50S ribosomal subunit. The polypeptide is Ribosomal RNA large subunit methyltransferase E (Blochmanniella floridana).